A 161-amino-acid polypeptide reads, in one-letter code: Non-secretory ribonuclease (161 aa).

The first 27 residues, 1-27 (MVPKLFTSQICLLLLLGLLAVEGSLHV), serve as a signal peptide directing secretion. Residue W34 is glycosylated (C-linked (Man) tryptophan). Residue H42 is the Proton acceptor of the active site. A glycan (N-linked (GlcNAc...) asparagine) is linked at N44. Intrachain disulfides connect C50–C110, C64–C123, C82–C138, and C89–C98. Y60 is modified (3'-nitrotyrosine). Residue 65–69 (KNQNT) participates in substrate binding. Residues N86, N92, N111, and N119 are each glycosylated (N-linked (GlcNAc...) asparagine). H156 acts as the Proton donor in catalysis.

Belongs to the pancreatic ribonuclease family. As to quaternary structure, interacts with and forms a tight 1:1 complex with RNH1. Dimerization of two such complexes may occur.

It localises to the lysosome. Its subcellular location is the cytoplasmic granule. It catalyses the reaction an [RNA] containing cytidine + H2O = an [RNA]-3'-cytidine-3'-phosphate + a 5'-hydroxy-ribonucleotide-3'-[RNA].. The enzyme catalyses an [RNA] containing uridine + H2O = an [RNA]-3'-uridine-3'-phosphate + a 5'-hydroxy-ribonucleotide-3'-[RNA].. Functionally, this is a non-secretory ribonuclease. It is a pyrimidine specific nuclease with a slight preference for U. Cytotoxin and helminthotoxin. Possesses a wide variety of biological activities. The sequence is that of Non-secretory ribonuclease (RNASE2) from Gorilla gorilla gorilla (Western lowland gorilla).